The following is a 37-amino-acid chain: Large ribosomal subunit protein bL36 (37 aa).

The protein belongs to the bacterial ribosomal protein bL36 family.

The protein is Large ribosomal subunit protein bL36 (rpmJ) of Fusobacterium nucleatum subsp. nucleatum (strain ATCC 25586 / DSM 15643 / BCRC 10681 / CIP 101130 / JCM 8532 / KCTC 2640 / LMG 13131 / VPI 4355).